Here is a 209-residue protein sequence, read N- to C-terminus: Hydrogenase expression/formation protein HupM (209 aa).

The Ni(2+) site is built by Glu21, Asp67, and His98.

Belongs to the peptidase A31 family.

Its function is as follows. Not known. Could be involved in the processing of hydrogenase. This Azotobacter chroococcum mcd 1 protein is Hydrogenase expression/formation protein HupM (hupM).